The following is a 1054-amino-acid chain: Probable sucrose-phosphate synthase 1 (1054 aa).

Residues 104–115 are compositionally biased toward basic and acidic residues; the sequence is RLERERGRREAV. Disordered regions lie at residues 104–125, 674–693, and 708–727; these read RLERERGRREAVADMSEDLSEG, LRNEEDDDENSESDSPSDSL, and DGDKNESREKGGGSHPDDRA.

It belongs to the glycosyltransferase 1 family. Homodimer or homotetramer.

It catalyses the reaction beta-D-fructose 6-phosphate + UDP-alpha-D-glucose = sucrose 6(F)-phosphate + UDP + H(+). Its pathway is glycan biosynthesis; sucrose biosynthesis; sucrose from D-fructose 6-phosphate and UDP-alpha-D-glucose: step 1/2. With respect to regulation, activity is regulated by phosphorylation and moderated by concentration of metabolites and light. Functionally, plays a role in photosynthetic sucrose synthesis by catalyzing the rate-limiting step of sucrose biosynthesis from UDP-glucose and fructose- 6-phosphate. Involved in the regulation of carbon partitioning in the leaves of plants. May regulate the synthesis of sucrose and therefore play a major role as a limiting factor in the export of photoassimilates out of the leaf. Plays a role for sucrose availability that is essential for plant growth and fiber elongation. This Craterostigma plantagineum (Blue gem) protein is Probable sucrose-phosphate synthase 1 (SPS1).